Here is a 1208-residue protein sequence, read N- to C-terminus: Spindle pole body protein pcp1 (1208 aa).

Residues 1 to 17 are compositionally biased toward basic and acidic residues; it reads MSERDFNTQSPKFKDEN. The disordered stretch occupies residues 1–91; it reads MSERDFNTQS…DKYNGSLGDK (91 aa). Over residues 48–64 the composition is skewed to polar residues; sequence NDKSSFQTPLRNGSYQP. Coiled coils occupy residues 151–375, 387–803, 874–1091, and 1177–1204; these read LREQ…KENQ, TDSM…ANIE, GTET…QSTQ, and ERMKRMKNEWLKQAQLKQSLQRAAAKAK. Serine 906 is modified (phosphoserine).

Interacts with ccq1.

The protein localises to the nucleus. Its subcellular location is the cytoplasm. It localises to the cytoskeleton. The protein resides in the microtubule organizing center. It is found in the spindle pole body. Its function is as follows. Spindle pole body component that binds calmodulin. Overexpression of pcp1 causes the formation of supernumerary SPB-like structures and disrupts both mitotic spindle assembly and chromosome segregation. This Schizosaccharomyces pombe (strain 972 / ATCC 24843) (Fission yeast) protein is Spindle pole body protein pcp1 (pcp1).